Here is a 174-residue protein sequence, read N- to C-terminus: Disulfide bond formation protein B (174 aa).

Residues 1–14 (MLHIFYIYSKSRKF) are Cytoplasmic-facing. Residues 15–31 (WAILICSSISLISIALL) traverse the membrane as a helical segment. Topologically, residues 32–49 (NQFFFLLKPCILCIYQRC) are periplasmic. An intrachain disulfide couples cysteine 41 to cysteine 44. A helical membrane pass occupies residues 50 to 65 (SLFGITIAGLIALISP). Residues 66–72 (KTTLLRL) are Cytoplasmic-facing. Residues 73–90 (FSIFIWLYSAIKGLYFSN) form a helical membrane-spanning segment. Over 91–146 (IHMQTTLHPSSSLTCDLFVSFPNWLPLNKWYPIIFDSKISNCYSYPQYLLYLEISQ) the chain is Periplasmic. Cysteine 105 and cysteine 132 are joined by a disulfide. Residues 147-165 (WMLLFFLIYLIIAIFTIIS) traverse the membrane as a helical segment. At 166–174 (QCHNLFQKK) the chain is on the cytoplasmic side.

Belongs to the DsbB family.

The protein localises to the cell inner membrane. Functionally, required for disulfide bond formation in some periplasmic proteins. Acts by oxidizing the DsbA protein. The polypeptide is Disulfide bond formation protein B (Blochmanniella floridana).